Consider the following 494-residue polypeptide: Glucose-6-phosphate exchanger SLC37A2 (494 aa).

Residues 20–37 (YRFSILFLTFVFYTSYHL) traverse the membrane as a helical segment. Residues Asn-52, Asn-63, and Asn-67 are each glycosylated (N-linked (GlcNAc...) asparagine). Helical transmembrane passes span 85–105 (FGVL…FSGI), 116–136 (LSTG…GFYW), 146–166 (LVQA…VACV), 187–207 (SVGN…AWGL), 208–228 (SFIV…LFLV), 295–315 (LCLL…PLYI), 327–347 (GDLS…AGLV), 355–375 (ASTC…YNKI), 384–404 (VGML…ITTA), 427–447 (AIID…AGLI), and 455–475 (VFYM…RLVY).

The protein belongs to the major facilitator superfamily. Organophosphate:Pi antiporter (OPA) (TC 2.A.1.4) family.

The protein localises to the endoplasmic reticulum membrane. It catalyses the reaction D-glucose 6-phosphate(in) + phosphate(out) = D-glucose 6-phosphate(out) + phosphate(in). In terms of biological role, inorganic phosphate and glucose-6-phosphate antiporter. May transport cytoplasmic glucose-6-phosphate into the lumen of the endoplasmic reticulum and translocate inorganic phosphate into the opposite direction. This Danio rerio (Zebrafish) protein is Glucose-6-phosphate exchanger SLC37A2.